The chain runs to 150 residues: SsrA-binding protein (150 aa).

It belongs to the SmpB family.

The protein localises to the cytoplasm. Required for rescue of stalled ribosomes mediated by trans-translation. Binds to transfer-messenger RNA (tmRNA), required for stable association of tmRNA with ribosomes. tmRNA and SmpB together mimic tRNA shape, replacing the anticodon stem-loop with SmpB. tmRNA is encoded by the ssrA gene; the 2 termini fold to resemble tRNA(Ala) and it encodes a 'tag peptide', a short internal open reading frame. During trans-translation Ala-aminoacylated tmRNA acts like a tRNA, entering the A-site of stalled ribosomes, displacing the stalled mRNA. The ribosome then switches to translate the ORF on the tmRNA; the nascent peptide is terminated with the 'tag peptide' encoded by the tmRNA and targeted for degradation. The ribosome is freed to recommence translation, which seems to be the essential function of trans-translation. The protein is SsrA-binding protein of Chlamydia caviae (strain ATCC VR-813 / DSM 19441 / 03DC25 / GPIC) (Chlamydophila caviae).